We begin with the raw amino-acid sequence, 430 residues long: MSETIISAEVVEKNNAARKPDLERDYASLGERLDRRGIAIDAIRAKVEKFAVAIPSWGVGTGGTRFARFPGAGEPRDIFDKIEDCAVISQLTQATPTVSLHIPWDKADPNRLKQAASRFGLGFDAMNSNTFSDARDQKLSYKFGSLSHADAGTRRQAVEHNLECIEIGKTLGSKALTVWIGDGSNFPGQVNFARAFERYLDAMKAVYAGLPADWKLFTEHKMYEPAFYSTVVQDWGTNYLIAKELGDRAFCLVDLGHHAPNVNIEMIVSRLIQFKKLGGFHFNDSKYGDDDLDAGSIDPYRLFLVFNELVDAELSGAEGFDPAHMLDQSHNVTDPIESLMLSAVEVQRAYAQALLVDRKALEGFQDGNDALMATQTLKAAYRTDVEPILAMARLKTGGAIDPVATYRAAGYRAKVAAERPAVTGGSGGIV.

Mn(2+)-binding residues include His-257, Asp-289, and Asp-291.

It belongs to the rhamnose isomerase family. The cofactor is Mn(2+).

The protein is Probable sugar isomerase mlr5709 of Mesorhizobium japonicum (strain LMG 29417 / CECT 9101 / MAFF 303099) (Mesorhizobium loti (strain MAFF 303099)).